Reading from the N-terminus, the 451-residue chain is Macrophage scavenger receptor types I and II (451 aa).

Residues 1-50 (MEQWDHFHNQQEDTDSCSESVKFDARSMTALLPPNPKNSPSLQEKLKSFK) lie on the Cytoplasmic side of the membrane. Residue Ser27 is modified to Phosphoserine. Residues 51-76 (AALIALYLLVFAVLIPLIGIVAAQLL) traverse the membrane as a helical; Signal-anchor for type II membrane protein segment. The tract at residues 77 to 109 (KWETKNCSVSSTNANDITQSLTGKGNDSEEEMR) is spacer. The Extracellular portion of the chain corresponds to 77–451 (KWETKNCSVS…SEDAGVTCTL (375 aa)). 7 N-linked (GlcNAc...) asparagine glycosylation sites follow: Asn82, Asn102, Asn143, Asn184, Asn221, Asn249, and Asn267. Residues 171 to 255 (NAIDEISKSL…VLNNITNDLR (85 aa)) adopt a coiled-coil conformation. The segment at 267–346 (NITLIQGPPG…EKGSGNTLTP (80 aa)) is disordered. The Collagen-like domain occupies 273-341 (GPPGPPGEKG…KGQKGEKGSG (69 aa)). An SRCR domain is found at 350-450 (VRLVGGSGPH…HSEDAGVTCT (101 aa)). Intrachain disulfides connect Cys375/Cys439, Cys388/Cys449, and Cys419/Cys429.

In terms of assembly, homotrimer. Interacts with MYO18A. As to expression, isoform I, isoform II and isoform III are expressed in monocyte-derived macrophages. Isoform I and isoform II are expressed in the liver, placenta and brain.

The protein resides in the membrane. Functionally, membrane glycoproteins implicated in the pathologic deposition of cholesterol in arterial walls during atherogenesis. Two types of receptor subunits exist. These receptors mediate the endocytosis of a diverse group of macromolecules, including modified low density lipoproteins (LDL). Isoform III does not internalize acetylated LDL. In Homo sapiens (Human), this protein is Macrophage scavenger receptor types I and II (MSR1).